Here is a 130-residue protein sequence, read N- to C-terminus: Small ribosomal subunit protein uS9 (130 aa).

Residues 99–130 (KSAGMLTRDPRMKERKKPGLKKARKASQFSKR) are disordered. Positions 111 to 130 (KERKKPGLKKARKASQFSKR) are enriched in basic residues.

It belongs to the universal ribosomal protein uS9 family.

This chain is Small ribosomal subunit protein uS9, found in Latilactobacillus sakei subsp. sakei (strain 23K) (Lactobacillus sakei subsp. sakei).